Consider the following 206-residue polypeptide: Probable GTP-binding protein EngB (206 aa).

Residues 23 to 195 (DLLEIAFVGR…WARIEAIMAE (173 aa)) enclose the EngB-type G domain. Residues 31–38 (GRSNVGKS), 58–62 (GRTQL), 76–79 (DLPG), 143–146 (TKCD), and 174–176 (FSA) each bind GTP. The Mg(2+) site is built by Ser-38 and Thr-60.

The protein belongs to the TRAFAC class TrmE-Era-EngA-EngB-Septin-like GTPase superfamily. EngB GTPase family. Mg(2+) is required as a cofactor.

In terms of biological role, necessary for normal cell division and for the maintenance of normal septation. This is Probable GTP-binding protein EngB from Geobacter sulfurreducens (strain ATCC 51573 / DSM 12127 / PCA).